We begin with the raw amino-acid sequence, 62 residues long: Large ribosomal subunit protein bL28 (62 aa).

The tract at residues 1-26 is disordered; sequence MARKCYVTGKSPKSGNNRSHALNKTK. Residues 11–20 show a composition bias toward polar residues; sequence SPKSGNNRSH.

This sequence belongs to the bacterial ribosomal protein bL28 family.

The sequence is that of Large ribosomal subunit protein bL28 from Exiguobacterium sp. (strain ATCC BAA-1283 / AT1b).